The sequence spans 208 residues: Large ribosomal subunit protein uL4 (208 aa).

The interval 49–78 (HKAKTRAEVRGGGKKPFRQKGTGNARQGST) is disordered. Positions 69 to 78 (GTGNARQGST) are enriched in polar residues.

This sequence belongs to the universal ribosomal protein uL4 family. In terms of assembly, part of the 50S ribosomal subunit.

In terms of biological role, one of the primary rRNA binding proteins, this protein initially binds near the 5'-end of the 23S rRNA. It is important during the early stages of 50S assembly. It makes multiple contacts with different domains of the 23S rRNA in the assembled 50S subunit and ribosome. Forms part of the polypeptide exit tunnel. In Chlorobaculum tepidum (strain ATCC 49652 / DSM 12025 / NBRC 103806 / TLS) (Chlorobium tepidum), this protein is Large ribosomal subunit protein uL4.